A 2603-amino-acid polypeptide reads, in one-letter code: Squalestatin tetraketide synthase (2603 aa).

One can recognise a Ketosynthase family 3 (KS3) domain in the interval 29 to 455; that stretch reads TIPIAIIGMS…GANAHVILES (427 aa). Active-site for beta-ketoacyl synthase activity residues include C202, H337, and H377. Residues 463–512 form a disordered region; sequence IANGSGRSNGTGNGHNGANGTTNGHNGTNGTTNGHFDATQATNGHYGTDE. Over residues 469-479 the composition is skewed to gly residues; the sequence is RSNGTGNGHNG. Over residues 480 to 497 the composition is skewed to low complexity; the sequence is ANGTTNGHNGTNGTTNGH. The malonyl-CoA:ACP transacylase (MAT) domain stretch occupies residues 608 to 931; it reads VFTGQGAQWF…PYISCLLRGQ (324 aa). Positions 1000 to 1138 are N-terminal hotdog fold; sequence HDLLGSLIVG…GRITIEFDTS (139 aa). One can recognise a PKS/mFAS DH domain in the interval 1000–1314; that stretch reads HDLLGSLIVG…NQSVGQMAPQ (315 aa). Positions 1000 to 1314 are dehydratase (DH) domain; that stretch reads HDLLGSLIVG…NQSVGQMAPQ (315 aa). Residue H1032 is the Proton acceptor; for dehydratase activity of the active site. The tract at residues 1157–1314 is C-terminal hotdog fold; it reads LMRSVDPSNL…NQSVGQMAPQ (158 aa). D1223 (proton donor; for dehydratase activity) is an active-site residue. A methyltransferase (CMet) domain region spans residues 1465 to 1665; sequence LYRYYTDAIK…GLDIELRDCD (201 aa). Residues 1892–2205 form an enoyl reductase (ER) (ER) domain region; sequence GLIDTLQFSK…AGKHMGKIVI (314 aa). The segment at 2228 to 2406 is ketoreductase (KR) domain; that stretch reads ASYLIVGGLG…AVSIDLGMVQ (179 aa). Positions 2516–2593 constitute a Carrier domain; that stretch reads EAIDVVGRAI…ALATTVATKS (78 aa). O-(pantetheine 4'-phosphoryl)serine is present on S2553.

It functions in the pathway secondary metabolite biosynthesis. Highly reducing polyketide synthase (HR-PKS); part of the gene cluster that mediates the biosynthesis of squalestatin S1 (SQS1, also known as zaragozic acid A), a lead compound for the treatment of hyper-cholesterolemia by targeting squalene synthase (SS). Pks1 is responsible for the biosynthesis of the tetraketide sidechain of SQS1. The biosynthesis must involve 3 rounds of chain extension. After the first and second rounds methyl-transfer occurs, and in all rounds of extension the ketoreductase and dehydratase are active. The enoyl reductase and C-MeT are not active in the final round of extension. This Phoma sp. (strain C2932) protein is Squalestatin tetraketide synthase.